Reading from the N-terminus, the 423-residue chain is tRNA(Ile)-lysidine synthase (423 aa).

27–32 (SGGVDS) is a binding site for ATP.

Belongs to the tRNA(Ile)-lysidine synthase family.

The protein resides in the cytoplasm. The catalysed reaction is cytidine(34) in tRNA(Ile2) + L-lysine + ATP = lysidine(34) in tRNA(Ile2) + AMP + diphosphate + H(+). In terms of biological role, ligates lysine onto the cytidine present at position 34 of the AUA codon-specific tRNA(Ile) that contains the anticodon CAU, in an ATP-dependent manner. Cytidine is converted to lysidine, thus changing the amino acid specificity of the tRNA from methionine to isoleucine. This chain is tRNA(Ile)-lysidine synthase, found in Streptococcus mutans serotype c (strain ATCC 700610 / UA159).